Reading from the N-terminus, the 100-residue chain is Large ribosomal subunit protein bL27 (100 aa).

A propeptide spanning residues 1–9 (MLVMNLQLF) is cleaved from the precursor.

The protein belongs to the bacterial ribosomal protein bL27 family. In terms of processing, the N-terminus is cleaved by ribosomal processing cysteine protease Prp.

The sequence is that of Large ribosomal subunit protein bL27 from Clostridium botulinum (strain 657 / Type Ba4).